The sequence spans 271 residues: Phosphatidylglycerol--prolipoprotein diacylglyceryl transferase (271 aa).

The next 7 helical transmembrane spans lie at 10–30 (VALA…LVGI), 56–76 (LVFW…VLFY), 92–112 (WKGG…ALWF), 120–140 (FFQL…AGRI), 174–194 (PSQL…LWLF), 202–222 (MAVS…VEFV), and 237–257 (LTMG…LIWL). An a 1,2-diacyl-sn-glycero-3-phospho-(1'-sn-glycerol)-binding site is contributed by Arg-139.

The protein belongs to the Lgt family.

Its subcellular location is the cell inner membrane. The catalysed reaction is L-cysteinyl-[prolipoprotein] + a 1,2-diacyl-sn-glycero-3-phospho-(1'-sn-glycerol) = an S-1,2-diacyl-sn-glyceryl-L-cysteinyl-[prolipoprotein] + sn-glycerol 1-phosphate + H(+). It functions in the pathway protein modification; lipoprotein biosynthesis (diacylglyceryl transfer). Catalyzes the transfer of the diacylglyceryl group from phosphatidylglycerol to the sulfhydryl group of the N-terminal cysteine of a prolipoprotein, the first step in the formation of mature lipoproteins. The chain is Phosphatidylglycerol--prolipoprotein diacylglyceryl transferase from Pseudomonas fluorescens (strain Pf0-1).